The sequence spans 1923 residues: GREB1-like protein (1923 aa).

A compositionally biased stretch (acidic residues) spans 87 to 96 (EDDEDDEEMS). Disordered stretches follow at residues 87 to 111 (EDDE…KPAP), 246 to 326 (SCHS…GPPK), and 1101 to 1222 (RAAV…RGCR). The span at 252 to 262 (PSSSVSSTVTP) shows a compositional bias: low complexity. Polar residues-rich tracts occupy residues 263–278 (ENGT…TQTD), 296–307 (TPAHTGNYSLSP), and 1119–1161 (PQSN…SPAT). Low complexity predominate over residues 1195–1206 (SSTTSKPSSSSS). A helical transmembrane segment spans residues 1843–1862 (GVFFSGLLLYLCDSFVGADL).

Belongs to the GREB1 family. As to expression, widely expressed, with prominent expression in the cochlea. Expressed at high levels in fetal kidney. In adult tissues, highest levels in vagina, cervix and epididymis.

It localises to the membrane. In terms of biological role, plays a major role in early metanephros and genital development. The sequence is that of GREB1-like protein (GREB1L) from Homo sapiens (Human).